A 367-amino-acid polypeptide reads, in one-letter code: Histidinol-phosphate aminotransferase 1 (367 aa).

At K229 the chain carries N6-(pyridoxal phosphate)lysine.

The protein belongs to the class-II pyridoxal-phosphate-dependent aminotransferase family. Histidinol-phosphate aminotransferase subfamily. Homodimer. Pyridoxal 5'-phosphate serves as cofactor.

The enzyme catalyses L-histidinol phosphate + 2-oxoglutarate = 3-(imidazol-4-yl)-2-oxopropyl phosphate + L-glutamate. The protein operates within amino-acid biosynthesis; L-histidine biosynthesis; L-histidine from 5-phospho-alpha-D-ribose 1-diphosphate: step 7/9. The sequence is that of Histidinol-phosphate aminotransferase 1 from Idiomarina loihiensis (strain ATCC BAA-735 / DSM 15497 / L2-TR).